Reading from the N-terminus, the 268-residue chain is Acidic leucine-rich nuclear phosphoprotein 32 family member E (268 aa).

The residue at position 1 (methionine 1) is an N-acetylmethionine. LRR repeat units lie at residues 18-38 (EVTE…EGLN), 43-64 (ELEF…PSLN), 65-87 (KLRK…AEKC), and 89-110 (NLTY…EALQ). Residue lysine 68 forms a Glycyl lysine isopeptide (Lys-Gly) (interchain with G-Cter in SUMO2) linkage. The LRRCT domain maps to 123–161 (CEITNLEDYRESIFELLQQITYLDGFDQEDNEAPDSEEE). Composition is skewed to acidic residues over residues 149 to 216 (DQED…EEEV) and 226 to 247 (IQDE…EEEE). Positions 149-268 (DQEDNEAPDS…AEDDGEEEDD (120 aa)) are disordered. Residues 215 to 268 (EVGLSYLMKEEIQDEEDDDDYVEEGEEEEEEEEGGLRGEKRKRDAEDDGEEEDD) form a ZID domain region. Residues 248–259 (GGLRGEKRKRDA) show a composition bias toward basic and acidic residues.

This sequence belongs to the ANP32 family. In terms of assembly, interacts with the importin alpha KPNA1 and KPNA2. Component of a SWR1-like complex, composed of EP400, KAT5/TIP60, TRRAP, BRD8, RUVBL1, RUVBL2, ING3 and ANP32E; the complex does not contain SRCAP. Interacts with H2A.Z/H2AZ1. Post-translationally, phosphorylated. The phosphorylation is nuclear localization signal (NLS)-dependent. In terms of tissue distribution, expressed in peripheral blood leukocytes, colon, small intestine, prostate, thymus, spleen, skeletal muscle, liver and kidney.

It localises to the cytoplasm. Its subcellular location is the nucleus. Histone chaperone that specifically mediates the genome-wide removal of histone H2A.Z/H2AZ1 from the nucleosome: removes H2A.Z/H2AZ1 from its normal sites of deposition, especially from enhancer and insulator regions. Not involved in deposition of H2A.Z/H2AZ1 in the nucleosome. May stabilize the evicted H2A.Z/H2AZ1-H2B dimer, thus shifting the equilibrium towards dissociation and the off-chromatin state. Inhibits activity of protein phosphatase 2A (PP2A). Does not inhibit protein phosphatase 1. May play a role in cerebellar development and synaptogenesis. This is Acidic leucine-rich nuclear phosphoprotein 32 family member E (ANP32E) from Homo sapiens (Human).